Here is a 942-residue protein sequence, read N- to C-terminus: Protein FAM184B (942 aa).

Disordered stretches follow at residues 1-26 (MASALNSKIHPPGTCASSKADARGGS) and 73-97 (QEDLQDTGAETRTRLPQEQSRTSED). Coiled-coil stretches lie at residues 89–150 (QEQS…RVLI), 196–337 (EMHQ…DRLM), and 387–495 (SETQ…SLLE). The tract at residues 486-542 (STKLQNSLLEDPCSRPKKPARDEGLEKLTDEEESSSDEEERTGESVKGKSDLQPPFE) is disordered. A compositionally biased stretch (basic and acidic residues) spans 504-513 (PARDEGLEKL). Positions 514–526 (TDEEESSSDEEER) are enriched in acidic residues. 2 coiled-coil regions span residues 575 to 619 (NKDS…ESLR) and 686 to 815 (EKGL…ERRF). A disordered region spans residues 880 to 934 (APPITKSPSLDPSPSCSQPYKPTQLLDGKTASRTQDGEPAQPKEAPQKQGSPHQE). Positions 885–900 (KSPSLDPSPSCSQPYK) are enriched in polar residues.

It belongs to the FAM184 family.

This Mus musculus (Mouse) protein is Protein FAM184B (Fam184b).